The primary structure comprises 231 residues: MFDIGFSELLLFGVIALIVLGPEKLPQAARTAGQWYAKIRRTVSTLQSEIEAELDLAETRQQMQKELAKIRQTEAEMRREMAEMRGSMQEFESSKNQHLKASRDLVDDAKPRQSSQGSSENDDNRPVSPKSFDYAYDNNRQAEKPESSEQPSAQGDNDSLKTDFNDNANPVIQTITTRPWENMWFRLGAYDKARRLPQPPYLPNYKADILLNSHIDSLLPKQASVNEQESH.

The chain crosses the membrane as a helical span at residues 1-21; sequence MFDIGFSELLLFGVIALIVLG. The segment at 77 to 168 is disordered; sequence MRREMAEMRG…SLKTDFNDNA (92 aa). Positions 101-111 are enriched in basic and acidic residues; the sequence is ASRDLVDDAKP. Over residues 148 to 157 the composition is skewed to polar residues; it reads SEQPSAQGDN.

It belongs to the TatB family. In terms of assembly, the Tat system comprises two distinct complexes: a TatABC complex, containing multiple copies of TatA, TatB and TatC subunits, and a separate TatA complex, containing only TatA subunits. Substrates initially bind to the TatABC complex, which probably triggers association of the separate TatA complex to form the active translocon.

It is found in the cell inner membrane. In terms of biological role, part of the twin-arginine translocation (Tat) system that transports large folded proteins containing a characteristic twin-arginine motif in their signal peptide across membranes. Together with TatC, TatB is part of a receptor directly interacting with Tat signal peptides. TatB may form an oligomeric binding site that transiently accommodates folded Tat precursor proteins before their translocation. The polypeptide is Sec-independent protein translocase protein TatB (Psychrobacter cryohalolentis (strain ATCC BAA-1226 / DSM 17306 / VKM B-2378 / K5)).